Consider the following 402-residue polypeptide: Zinc finger protein 586 (402 aa).

One can recognise a KRAB domain in the interval 15–87 (VTFEDVAVNF…DQGGHSGERP (73 aa)). The C2H2-type 1; degenerate zinc finger occupies 88-116 (YECGEYRKLFKNKSCLTEPRRDHKHRNVR). Residues 122–144 (YECSKYGKLFHQKPTLHIHERFH) form a C2H2-type 2; degenerate zinc finger. The C2H2-type 3; degenerate zinc-finger motif lies at 150–172 (YECSECGKSFHQSSSLLQRQTLH). C2H2-type zinc fingers lie at residues 178 to 200 (YECI…RKVH), 206 to 228 (YECN…RRIH), 234 to 256 (YECS…LRVH), 262 to 284 (YECV…QRVH), 290 to 312 (YECS…QRVH), 317 to 339 (HECG…LRVH), 345 to 367 (YECS…LRVH), and 373 to 395 (YECI…QRVH).

Belongs to the krueppel C2H2-type zinc-finger protein family.

The protein localises to the nucleus. Its function is as follows. May be involved in transcriptional regulation. The chain is Zinc finger protein 586 (ZNF586) from Homo sapiens (Human).